Here is an 82-residue protein sequence, read N- to C-terminus: Putative antitoxin Saci_0468 (82 aa).

The protein belongs to the UPF0330 family.

Possibly the antitoxin component of a type II toxin-antitoxin (TA) system. The sequence is that of Putative antitoxin Saci_0468 from Sulfolobus acidocaldarius (strain ATCC 33909 / DSM 639 / JCM 8929 / NBRC 15157 / NCIMB 11770).